The primary structure comprises 794 residues: Copper-exporting P-type ATPase (794 aa).

HMA domains follow at residues 4–69 and 71–137; these read TTLT…YDVA and EQVE…YDAE. The Cu(+) site is built by Cys15, Cys18, Cys82, and Cys85. 6 helical membrane-spanning segments follow: residues 161–181, 186–206, 225–245, 255–275, 410–430, and 437–457; these read IISAILSLPLLLVMVVHISPI, ILVNPWVQLILSTPVQFIIGW, VLVAVGTSAAYFYSIYEMMMW, LYFETSAILITLILLGKYLEA, YFVPIVVSIAVITFIIWIIFV, and PALVSAISVLVIACPCALGLA. Catalysis depends on Asp494, which acts as the 4-aspartylphosphate intermediate. Residues Asp689 and Asp693 each contribute to the Mg(2+) site. A run of 2 helical transmembrane segments spans residues 747-767 and 773-789; these read LFWAFGYNVAGIPIAACGLLA and AAMALSSVSVVMNALRL.

Belongs to the cation transport ATPase (P-type) (TC 3.A.3) family. Type IB subfamily.

The protein resides in the cell membrane. It carries out the reaction Cu(+)(in) + ATP + H2O = Cu(+)(out) + ADP + phosphate + H(+). Functionally, involved in copper export. The polypeptide is Copper-exporting P-type ATPase (copA) (Staphylococcus epidermidis (strain ATCC 35984 / DSM 28319 / BCRC 17069 / CCUG 31568 / BM 3577 / RP62A)).